Consider the following 137-residue polypeptide: Large ribosomal subunit protein uL16 (137 aa).

The protein belongs to the universal ribosomal protein uL16 family. In terms of assembly, part of the 50S ribosomal subunit.

Binds 23S rRNA and is also seen to make contacts with the A and possibly P site tRNAs. This is Large ribosomal subunit protein uL16 from Rhodopseudomonas palustris (strain BisB18).